The chain runs to 811 residues: Transmembrane protease serine 6 (811 aa).

The disordered stretch occupies residues 1–48; it reads MPRCFQLPCSTRMPTTEVPQAADGQGDAGDGEEAAEPEGKFKPPKNTK. The Cytoplasmic segment spans residues 1–59; sequence MPRCFQLPCSTRMPTTEVPQAADGQGDAGDGEEAAEPEGKFKPPKNTKRKNRDYVRFTP. The segment covering 8 to 18 has biased composition (polar residues); that stretch reads PCSTRMPTTEV. Residues 60 to 80 traverse the membrane as a helical; Signal-anchor for type II membrane protein segment; sequence LLLVLAALVSAGVMLWYFLGY. The Extracellular segment spans residues 81 to 811; that stretch reads KAEVTVSQVY…VINWIQQVLT (731 aa). Residues 86–209 enclose the SEA domain; it reads VSQVYSGSLR…EGLVILEASV (124 aa). N-linked (GlcNAc...) asparagine glycans are attached at residues N138, N184, N216, N338, N433, and N453. CUB domains follow at residues 213 to 336 and 323 to 440; these read VVLN…QDCQ and FLLS…QISL. C335 and C366 are joined by a disulfide. 3 consecutive LDL-receptor class A domains span residues 445-477, 478-514, and 518-555; these read VQVYYSLYNQSDPCPGEFLCSVNGLCVPACDGI, KDCPNGLDERNCVCRAMFQCQEDSTCISLPRVCDRQP, and NGSDEEQCQEGVPCGTFTFQCEDRSCVKKPNPECDGQS. 10 cysteine pairs are disulfide-bonded: C458-C470, C464-C480, C474-C489, C491-C503, C497-C516, C510-C525, C531-C543, C538-C557, C551-C566, and C602-C618. An N-linked (GlcNAc...) asparagine glycan is attached at N518. Residues 577 to 811 form the Peptidase S1 domain; sequence IVGGTVSSEG…VINWIQQVLT (235 aa). Catalysis depends on charge relay system residues H617 and D668. 3 disulfides stabilise this stretch: C702–C768, C733–C747, and C758–C787. The active-site Charge relay system is the S762.

The protein belongs to the peptidase S1 family. In terms of assembly, interacts with HJV. The single-chain zymogen undergoes autoproteolytic processing. This results in TMPRSS6 shedding from the cell surface and conversion into an activated two-chains form which is released extracellularly. The process involves a trans-activation mechanism that requires TMPRSS6 oligomerization. In terms of tissue distribution, expressed at highest levels in adult mice liver, kidney and uterus. Also strongly expressed within the nasal cavity by olfactory epithelial cells. A weak, but detectable, signal in adult mice tissues analyzed including brain, lung, heart, kidney, spleen, muscle, intestine, thymus and pancreas. No signal in residual embryonic yolk sac, developing kidney tubules or in embryonic tissues analyzed including lung, heart, gastrointestinal tract and epithelium of the oral cavity.

Its subcellular location is the cell membrane. Its function is as follows. Membrane-bound serine protease. Through the cleavage of cell surface HJV, a regulator of the expression of the iron absorption-regulating hormone hepicidin/HAMP, plays a role in iron homeostasis. In Mus musculus (Mouse), this protein is Transmembrane protease serine 6 (Tmprss6).